A 707-amino-acid chain; its full sequence is U-box domain-containing protein 2 (707 aa).

The U-box domain occupies 239 to 313; that stretch reads RVPSDFRCSL…ASWCETNNVY (75 aa). ARM repeat units lie at residues 453-492, 494-534, 536-575, 577-615, and 617-656; these read TDNRIVIARCEAIPSLVSLLYSTDERIQADAVTCLLNLSI, DNNK…SLSV, EEYKTEIGEAGAIEPLVDLLGSGSLSGKKDAATALFNLSI, HENKTKVIEAGAVRYLVELMDPAFGMVEKAVVVLANLAT, and REGKIAIGEEGGIPVLVEVVELGSARGKENATAALLQLCT.

It carries out the reaction S-ubiquitinyl-[E2 ubiquitin-conjugating enzyme]-L-cysteine + [acceptor protein]-L-lysine = [E2 ubiquitin-conjugating enzyme]-L-cysteine + N(6)-ubiquitinyl-[acceptor protein]-L-lysine.. Its pathway is protein modification; protein ubiquitination. Its function is as follows. Functions as an E3 ubiquitin ligase. This is U-box domain-containing protein 2 (PUB2) from Arabidopsis thaliana (Mouse-ear cress).